A 338-amino-acid chain; its full sequence is Fructose-1,6-bisphosphatase class 1 1 (338 aa).

Positions 88, 107, 109, and 110 each coordinate Mg(2+). Residues 110–113 (DGSS) and Asn-196 each bind substrate. Mg(2+) is bound at residue Glu-268.

This sequence belongs to the FBPase class 1 family. Homotetramer. Mg(2+) is required as a cofactor.

The protein resides in the cytoplasm. It carries out the reaction beta-D-fructose 1,6-bisphosphate + H2O = beta-D-fructose 6-phosphate + phosphate. Its pathway is carbohydrate biosynthesis; Calvin cycle. The sequence is that of Fructose-1,6-bisphosphatase class 1 1 from Bradyrhizobium sp. (strain BTAi1 / ATCC BAA-1182).